The primary structure comprises 469 residues: Secreted triacylglycerol lipase LIP3 (469 aa).

Residues 1–21 (MVSLLWKFTLLCLFLLACTSA) form the signal peptide. Cys121 and Cys292 are disulfide-bonded. Ser205 functions as the Nucleophile in the catalytic mechanism. An N-linked (GlcNAc...) asparagine glycan is attached at Asn238. Catalysis depends on residues Asp352 and His386.

This sequence belongs to the AB hydrolase superfamily. Lipase family. Class Lip subfamily.

It is found in the secreted. It catalyses the reaction a triacylglycerol + H2O = a diacylglycerol + a fatty acid + H(+). The catalysed reaction is a monoacylglycerol + H2O = glycerol + a fatty acid + H(+). It carries out the reaction a diacylglycerol + H2O = a monoacylglycerol + a fatty acid + H(+). Functionally, secreted lipase that hydrolyzes acylglycerol lipids such as triacylglycerols and consequently releases free fatty acid. Generates free oleic acid from the substrates mono- and diolein and hydrolyzes triolein in significant amounts. Due to an absence of fatty acid synthase genes in Malassezia species, secretory lipases are essential for the yeast to generate free fatty acids from degradation of sebum and assimilate them as lipid sources for growth. Plays an essential role at the pathogen-host interface during disease progression. Performs also the reverse reaction to build diacyl- and triacyl- glycerols from monoacylglycerols. The sequence is that of Secreted triacylglycerol lipase LIP3 from Malassezia restricta (strain ATCC 96810 / NBRC 103918 / CBS 7877) (Seborrheic dermatitis infection agent).